A 525-amino-acid chain; its full sequence is Keratin, type II cytoskeletal 71 (525 aa).

The head stretch occupies residues 1-131; the sequence is MSRQFTCKSG…DPEIQKVRAQ (131 aa). A coil 1A region spans residues 132–167; it reads EREQIKALNNKFASFIDKVRFLEQQNQVLETKWELL. One can recognise an IF rod domain in the interval 132 to 445; that stretch reads EREQIKALNN…KLLESEECRM (314 aa). A linker 1 region spans residues 168–186; the sequence is QQLDLNNCKNNLEPILEGY. Residues 187 to 278 form a coil 1B region; that stretch reads ISNLRKQLET…CLYEAEIAQI (92 aa). Residues 279-302 form a linker 12 region; the sequence is QSHISDMSVILSMDNNRDLNLDSI. A coil 2 region spans residues 303–441; the sequence is IDEVRAQYED…ATYRKLLESE (139 aa). The segment at 442 to 525 is tail; the sequence is ECRMSGEFPS…LSAPSKKASR (84 aa). Positions 492–525 are disordered; the sequence is VRGGESRSRSSTTDYKDALGKGSSLSAPSKKASR. Residues 495–510 are compositionally biased toward basic and acidic residues; the sequence is GESRSRSSTTDYKDAL.

The protein belongs to the intermediate filament family. In terms of assembly, heterodimer of a type I and a type II keratin. Associates with KRT16 and/or KRT17.

It localises to the cytoplasm. It is found in the cytoskeleton. Its function is as follows. Plays a central role in hair formation. Essential component of keratin intermediate filaments in the inner root sheath (IRS) of the hair follicle. This is Keratin, type II cytoskeletal 71 (KRT71) from Bos taurus (Bovine).